A 245-amino-acid chain; its full sequence is Octanoyltransferase (245 aa).

A BPL/LPL catalytic domain is found at 54–242; the sequence is KTAHEQVWLL…AFEKIFGPTI (189 aa). Substrate is bound by residues 93–100, 173–175, and 186–188; these read RGGEFTYH, AIG, and GVS. The active-site Acyl-thioester intermediate is Cys-204.

Belongs to the LipB family.

The protein localises to the cytoplasm. The enzyme catalyses octanoyl-[ACP] + L-lysyl-[protein] = N(6)-octanoyl-L-lysyl-[protein] + holo-[ACP] + H(+). The protein operates within protein modification; protein lipoylation via endogenous pathway; protein N(6)-(lipoyl)lysine from octanoyl-[acyl-carrier-protein]: step 1/2. Functionally, catalyzes the transfer of endogenously produced octanoic acid from octanoyl-acyl-carrier-protein onto the lipoyl domains of lipoate-dependent enzymes. Lipoyl-ACP can also act as a substrate although octanoyl-ACP is likely to be the physiological substrate. The protein is Octanoyltransferase of Bartonella tribocorum (strain CIP 105476 / IBS 506).